Consider the following 368-residue polypeptide: Putative F-box/kelch-repeat protein At5g02995 (368 aa).

Positions 35-84 constitute an F-box domain; the sequence is SLYWNDPTEDCVWNCLARISRFHYPTLSLVSKGFRSLIASPELEATRSFI. 2 Kelch repeats span residues 140-186 and 187-233; these read DIYI…IVDK and KIYV…VSGG.

The sequence is that of Putative F-box/kelch-repeat protein At5g02995 from Arabidopsis thaliana (Mouse-ear cress).